The chain runs to 256 residues: Aspirochlorine biosynthesis protein F (256 aa).

N-linked (GlcNAc...) asparagine glycosylation occurs at Asn19. Transmembrane regions (helical) follow at residues 21 to 41 (SITPHLLLVGAQILFLSGPHF), 163 to 183 (LVWVLLMTDLVSQMMLRFFFT), and 214 to 234 (FGLGPYFFINMQYLVVSILAV).

The protein resides in the membrane. It participates in mycotoxin biosynthesis. Its function is as follows. Part of the gene cluster that mediates the biosynthesis of aspirochlorine (or antibiotic A30641), an unusual halogenated spiro compound with distinctive antifungal properties due to selective inhibition of protein biosynthesis, and which is also active against bacteria, viruses, and murine tumor cells. The non-ribosomal peptide synthetase (NRPS) aclP is responsible the formation of the diketopiperazine (DKP) core from the condensation of 2 phenylalanine residues. One Phe residue is tailored into chlorotyrosine by hydroxylation and chlorination, whereas the second Phe undergoes an unprecedented C-C bond cleavage to be converted into glycine. After formation of the DKP, sulfur is incorporated into the DKP by conjugation with glutathione by aclG, followed by its stepwise degradation to the thiol by aclI, aclJ and aclK, and the dithiol oxidation by aclT. In addition, oxygenases (aclB, aclC, aclL and aclO) and O-methyltransferases (aclM and aclU) act as tailoring enzymes to produce the intermediate dechloroaspirochlorine. Ultimately, chlorination of dechloroaspirochlorine by the halogenase aclH is the last step in the aspirochlorine pathway. The chain is Aspirochlorine biosynthesis protein F from Aspergillus oryzae (strain ATCC 42149 / RIB 40) (Yellow koji mold).